The chain runs to 1186 residues: ATP-dependent helicase/deoxyribonuclease subunit B (1186 aa).

The UvrD-like helicase ATP-binding domain maps to 1-308; that stretch reads MSVKFLLGRA…AHLEKEWGKN (308 aa). 8 to 15 is an ATP binding site; that stretch reads GRAGSGKT. A UvrD-like helicase C-terminal domain is found at 288–620; the sequence is SLPRFKDNPA…LVGTADRSRY (333 aa). Cys822, Cys1144, Cys1147, and Cys1153 together coordinate [4Fe-4S] cluster.

The protein belongs to the helicase family. AddB/RexB type 1 subfamily. Heterodimer of AddA and AddB. Requires Mg(2+) as cofactor. It depends on [4Fe-4S] cluster as a cofactor.

Its function is as follows. The heterodimer acts as both an ATP-dependent DNA helicase and an ATP-dependent, dual-direction single-stranded exonuclease. Recognizes the chi site generating a DNA molecule suitable for the initiation of homologous recombination. The AddB subunit has 5' -&gt; 3' nuclease activity but not helicase activity. This is ATP-dependent helicase/deoxyribonuclease subunit B from Natranaerobius thermophilus (strain ATCC BAA-1301 / DSM 18059 / JW/NM-WN-LF).